The primary structure comprises 350 residues: tRNA N6-adenosine threonylcarbamoyltransferase (350 aa).

Fe cation-binding residues include His-115 and His-119. Substrate contacts are provided by residues 137-141 (IISGG), Asp-170, Gly-183, and Asn-281. Asp-309 serves as a coordination point for Fe cation.

It belongs to the KAE1 / TsaD family. Requires Fe(2+) as cofactor.

The protein resides in the cytoplasm. The enzyme catalyses L-threonylcarbamoyladenylate + adenosine(37) in tRNA = N(6)-L-threonylcarbamoyladenosine(37) in tRNA + AMP + H(+). Functionally, required for the formation of a threonylcarbamoyl group on adenosine at position 37 (t(6)A37) in tRNAs that read codons beginning with adenine. Is involved in the transfer of the threonylcarbamoyl moiety of threonylcarbamoyl-AMP (TC-AMP) to the N6 group of A37, together with TsaE and TsaB. TsaD likely plays a direct catalytic role in this reaction. The chain is tRNA N6-adenosine threonylcarbamoyltransferase from Ehrlichia canis (strain Jake).